The following is a 2167-amino-acid chain: Myosin-VIIa (2167 aa).

Residues 63–733 form the Myosin motor domain; the sequence is QGVEDMISLG…HDLFLEQERD (671 aa). 156-163 contributes to the ATP binding site; sequence GESGAGKT. Actin-binding regions lie at residues 612–634 and 712–726; these read LDAL…KPNE and QLGH…AHDL. 4 consecutive IQ domains span residues 736–758, 759–788, 805–827, and 828–857; these read LTRK…RFLR, LRAA…GYMR, LRGH…EYGH, and KMWA…EHKQ. Positions 886-919 form a coiled coil; it reads QHYRDRLHELERREIQEQLENRRRVEVNMNIIND. The region spanning 1008–1245 is the MyTH4 1 domain; the sequence is YAKKALKHPL…PSWLELQATK (238 aa). One can recognise an FERM 1 domain in the interval 1250–1560; the sequence is IMLPITFMDG…YFLDGLKKRS (311 aa). An SH3 domain is found at 1558 to 1627; the sequence is KRSKYVIALQ…PAETVYVLPT (70 aa). Ser1651 and Ser1654 each carry phosphoserine. Positions 1701–1849 constitute a MyTH4 2 domain; the sequence is YSRDPIKAPL…PHQVEVEAIQ (149 aa). Positions 1855–2158 constitute an FERM 2 domain; that stretch reads IFHKVYFPDD…SYISLMLTNM (304 aa). Position 2045 is a phosphothreonine (Thr2045).

This sequence belongs to the TRAFAC class myosin-kinesin ATPase superfamily. Myosin family. In terms of assembly, homodimerizes in a two headed molecule through the formation of a coiled-coil rod. Homodimers motility is approximately 8-10 times slower than that of myosin V, and its step size is 30 nm, which is consistent with the presence of five IQ motifs in its neck region. Interacts with Cad99C (via the cytoplasmic domain). Interacts with zip and Sans. As to expression, expressed in the setae, micro- and macrochaetae on the head, thorax and wing.

The protein resides in the cytoplasm. The protein localises to the cell cortex. It is found in the cell projection. Its subcellular location is the microvillus. Functionally, myosins are actin-based motor molecules with ATPase activity. Unconventional myosins serve in intracellular movements: can function in cells as a single-molecule cargo transporter. A very slow and high-duty-ratio motor, may be suitable for tension maintenance of actin filaments. Their highly divergent tails are presumed to bind to membranous compartments, which would be moved relative to actin filaments. Plays a key role in the formation of cellular projections and other actin-based functions required for embryonic and larval viability. Necessary for auditory transduction: plays a role in Johnston's organ organization by functioning in scolopidial apical attachment and therefore to acoustic stimulus propagation from the antenna a2/a3 joint to transducing elements. Interaction with the myosin zip may be important for its function in scolopidial apical attachment. During oogenesis it has Cad99c-dependent and Cad99c-independent roles in regulating the shape and spacing of the follicle cell microvilli which secrete eggshell material such as the vitelline membrane. May be required for the normal expression of Cad99c in the follicle cell microvilli. This Drosophila melanogaster (Fruit fly) protein is Myosin-VIIa.